Reading from the N-terminus, the 20-residue chain is Putative serine protease (20 aa).

This sequence belongs to the peptidase S1 family.

The protein localises to the secreted. Functionally, binds the A.niger cell wall component alpha-1,3-glucan, a fungal pathogen-associated molecular pattern (PAMP) that activates the host immune response. The polypeptide is Putative serine protease (Galleria mellonella (Greater wax moth)).